A 162-amino-acid polypeptide reads, in one-letter code: UPF0260 protein CC_3276 (162 aa).

This sequence belongs to the UPF0260 family.

This Caulobacter vibrioides (strain ATCC 19089 / CIP 103742 / CB 15) (Caulobacter crescentus) protein is UPF0260 protein CC_3276.